The sequence spans 417 residues: Acid phosphatase (417 aa).

A signal peptide spans Met-1–Ala-19. N-linked (GlcNAc...) asparagine glycans are attached at residues Asn-122, Asn-187, and Asn-209. Residue Asp-216 is the Proton donor of the active site. Asn-218, Asn-333, and Asn-383 each carry an N-linked (GlcNAc...) asparagine glycan.

Post-translationally, the N-terminus is blocked.

It localises to the secreted. The enzyme catalyses a phosphate monoester + H2O = an alcohol + phosphate. This is Acid phosphatase (phoA) from Aspergillus niger.